The chain runs to 133 residues: Phosphoribosyl-AMP cyclohydrolase (133 aa).

Mg(2+) is bound at residue Asp-77. Position 78 (Cys-78) interacts with Zn(2+). Mg(2+)-binding residues include Asp-79 and Asp-81. Zn(2+)-binding residues include Cys-95 and Cys-102.

This sequence belongs to the PRA-CH family. Homodimer. Mg(2+) is required as a cofactor. Zn(2+) serves as cofactor.

The protein localises to the cytoplasm. The enzyme catalyses 1-(5-phospho-beta-D-ribosyl)-5'-AMP + H2O = 1-(5-phospho-beta-D-ribosyl)-5-[(5-phospho-beta-D-ribosylamino)methylideneamino]imidazole-4-carboxamide. The protein operates within amino-acid biosynthesis; L-histidine biosynthesis; L-histidine from 5-phospho-alpha-D-ribose 1-diphosphate: step 3/9. Functionally, catalyzes the hydrolysis of the adenine ring of phosphoribosyl-AMP. The polypeptide is Phosphoribosyl-AMP cyclohydrolase (Thiobacillus denitrificans (strain ATCC 25259 / T1)).